A 107-amino-acid chain; its full sequence is Conantokin-R (107 aa).

The signal sequence occupies residues 1–24 (MQLYTYLYLLVSLVTFYLILGTGT). Residues 25–80 (LGHGGALTERRSTDATALKPEPVLLQKSSARSTDDNGNDRLTQMKRILKKRGNKAR) constitute a propeptide that is removed on maturation. The interval 26-64 (GHGGALTERRSTDATALKPEPVLLQKSSARSTDDNGNDR) is disordered. Glu83, Glu84, Glu91, and Glu95 each carry 4-carboxyglutamate. A divalent metal cation is bound by residues Glu91 and Glu95. A disulfide bridge connects residues Cys101 and Cys105.

This sequence belongs to the conotoxin B superfamily. Ca(2+) is required as a cofactor. Requires Mg(2+) as cofactor. As to expression, expressed by the venom duct.

It is found in the secreted. Conantokins inhibit N-methyl-D-aspartate (NMDA) receptors. This toxin is potent in the following order of preference: NR2B approximately NR2A/GRIN2A &gt; NR2C/GRIN2C &gt;&gt; NR2D/GRIN2D. Induces sleep-like symptoms in young mice. Is a highly potent anticonvulsant compound. This Conus radiatus (Rayed cone) protein is Conantokin-R.